The following is a 226-amino-acid chain: Ethylene-responsive transcription factor-like protein At4g13040 (226 aa).

2 disordered regions span residues 63–109 (EERS…RKRV) and 195–226 (KKPK…SDKM). The span at 97–109 (PPKRRKQHRRKRV) shows a compositional bias: basic residues. A DNA-binding region (AP2/ERF) is located at residues 105–171 (RRKRVHNQEP…REPNFELSEE (67 aa)). A compositionally biased stretch (acidic residues) spans 217–226 (EEEEQDSDKM).

This sequence belongs to the AP2/ERF transcription factor family.

The protein resides in the nucleus. Its function is as follows. Probably acts as a transcriptional activator. Binds to the GCC-box pathogenesis-related promoter element. May be involved in the regulation of gene expression by stress factors and by components of stress signal transduction pathways. The protein is Ethylene-responsive transcription factor-like protein At4g13040 of Arabidopsis thaliana (Mouse-ear cress).